A 606-amino-acid polypeptide reads, in one-letter code: Prostaglandin G/H synthase 1 (606 aa).

The first 30 residues, methionine 1 to proline 30, serve as a signal peptide directing secretion. Residues proline 38–threonine 76 enclose the EGF-like domain. 4 disulfide bridges follow: cysteine 42-cysteine 53, cysteine 43-cysteine 165, cysteine 47-cysteine 63, and cysteine 65-cysteine 75. Asparagine 74, asparagine 110, and asparagine 150 each carry an N-linked (GlcNAc...) asparagine glycan. Histidine 213 acts as the Proton acceptor in catalysis. Tyrosine 391 acts as the For cyclooxygenase activity in catalysis. Histidine 394 provides a ligand contact to heme b. N-linked (GlcNAc...) asparagine glycosylation is present at asparagine 416. A disulfide bridge links cysteine 575 with cysteine 581.

Belongs to the prostaglandin G/H synthase family. Homodimer. It depends on heme b as a cofactor.

The protein localises to the microsome membrane. It localises to the endoplasmic reticulum membrane. It catalyses the reaction (5Z,8Z,11Z,14Z)-eicosatetraenoate + AH2 + 2 O2 = prostaglandin H2 + A + H2O. It carries out the reaction (5Z,8Z,11Z,14Z)-eicosatetraenoate + 2 O2 = prostaglandin G2. The catalysed reaction is prostaglandin G2 + AH2 = prostaglandin H2 + A + H2O. The enzyme catalyses (9Z,12Z)-octadecadienoate + AH2 + O2 = (9R)-hydroxy-(10E,12Z)-octadecadienoate + A + H2O. It catalyses the reaction (9Z,12Z)-octadecadienoate + AH2 + O2 = (9S)-hydroxy-(10E,12Z)-octadecadienoate + A + H2O. It carries out the reaction (9Z,12Z)-octadecadienoate + AH2 + O2 = (13S)-hydroxy-(9Z,11E)-octadecadienoate + A + H2O. The catalysed reaction is (9Z,12Z)-octadecadienoate + AH2 + O2 = (13R)-hydroxy-(9Z,11E)-octadecadienoate + A + H2O. It participates in lipid metabolism; prostaglandin biosynthesis. With respect to regulation, the cyclooxygenase activity is inhibited by nonsteroidal anti-inflammatory drugs (NSAIDs) including ibuprofen, flurbiprofen, ketoprofen, naproxen, flurbiprofen, anirolac, fenclofenac and diclofenac. Its function is as follows. Dual cyclooxygenase and peroxidase that plays an important role in the biosynthesis pathway of prostanoids, a class of C20 oxylipins mainly derived from arachidonate ((5Z,8Z,11Z,14Z)-eicosatetraenoate, AA, C20:4(n-6)), with a particular role in the inflammatory response. The cyclooxygenase activity oxygenates AA to the hydroperoxy endoperoxide prostaglandin G2 (PGG2), and the peroxidase activity reduces PGG2 to the hydroxy endoperoxide prostaglandin H2 (PGH2), the precursor of all 2-series prostaglandins and thromboxanes. This complex transformation is initiated by abstraction of hydrogen at carbon 13 (with S-stereochemistry), followed by insertion of molecular O2 to form the endoperoxide bridge between carbon 9 and 11 that defines prostaglandins. The insertion of a second molecule of O2 (bis-oxygenase activity) yields a hydroperoxy group in PGG2 that is then reduced to PGH2 by two electrons. Involved in the constitutive production of prostanoids in particular in the stomach and platelets. In gastric epithelial cells, it is a key step in the generation of prostaglandins, such as prostaglandin E2 (PGE2), which plays an important role in cytoprotection. In platelets, it is involved in the generation of thromboxane A2 (TXA2), which promotes platelet activation and aggregation, vasoconstriction and proliferation of vascular smooth muscle cells. Can also use linoleate (LA, (9Z,12Z)-octadecadienoate, C18:2(n-6)) as substrate and produce hydroxyoctadecadienoates (HODEs) in a regio- and stereospecific manner, being (9R)-HODE ((9R)-hydroxy-(10E,12Z)-octadecadienoate) and (13S)-HODE ((13S)-hydroxy-(9Z,11E)-octadecadienoate) its major products. This chain is Prostaglandin G/H synthase 1 (PTGS1), found in Oryctolagus cuniculus (Rabbit).